Here is a 1254-residue protein sequence, read N- to C-terminus: DNA-directed RNA polymerase subunit beta (1254 aa).

Belongs to the RNA polymerase beta chain family. The RNAP catalytic core consists of 2 alpha, 1 beta, 1 beta' and 1 omega subunit. When a sigma factor is associated with the core the holoenzyme is formed, which can initiate transcription.

It catalyses the reaction RNA(n) + a ribonucleoside 5'-triphosphate = RNA(n+1) + diphosphate. DNA-dependent RNA polymerase catalyzes the transcription of DNA into RNA using the four ribonucleoside triphosphates as substrates. This Protochlamydia amoebophila (strain UWE25) protein is DNA-directed RNA polymerase subunit beta.